The chain runs to 403 residues: Aloesone synthase (403 aa).

The active site involves Cys-174. CoA contacts are provided by residues Ser-281 and 318–321 (GGRA).

Belongs to the thiolase-like superfamily. Chalcone/stilbene synthases family. In terms of assembly, homodimer.

It participates in secondary metabolite biosynthesis; flavonoid biosynthesis. Its function is as follows. Catalyzes the iterative condensations of 6, 7 or 8 molecules of malonyl-CoA to produce various aromatic polyketides. Produces the heptaketide aloesone, the aglycone of aloesin, from 7 molecules of malonyl-CoA as a major product. Also able to produce a hexaketide pyrone, a heptaketide 6-(2-acetyl-3,5-dihydroxybenzyl)-4-hydroxy-2-pyrone, a novel heptaketide 6-(2-(2,4-dihydroxy-6-methylphenyl)-2-oxoethyl)-4-hydroxy-2-pyrone and octaketides SEK4/SEK4b. This is Aloesone synthase (PKS3) from Aloe arborescens (Kidachi aloe).